The sequence spans 311 residues: Dehydrogenase/reductase SDR family member 7C (311 aa).

An N-terminal signal peptide occupies residues 1–18; the sequence is MGLMAVLMLPLLLLGISG. Residues S47, L49, Y191, K195, and S226 each contribute to the NAD(+) site. Catalysis depends on Y191, which acts as the Proton acceptor.

The protein belongs to the short-chain dehydrogenases/reductases (SDR) family. Expressed in skeletal muscle and cardiac muscle. Also expressed in liver, kidney, adipocytes and skin.

The protein resides in the sarcoplasmic reticulum membrane. It carries out the reaction all-trans-retinol + NAD(+) = all-trans-retinal + NADH + H(+). In terms of biological role, NADH-dependent oxidoreductase which catalyzes the oxidation of all-trans-retinol to all-trans-retinal. Plays a role in the regulation of cardiac and skeletal muscle metabolic functions. Maintains Ca(2+) intracellular homeostasis by repressing Ca(2+) release from the sarcoplasmic reticulum (SR) in myotubes, possibly through local alternations in NAD/NADH or retinol/retinal. Also plays a role in Ca(2+) homeostasis by controlling Ca(2+) overload in the cytosol and the SR in myotubes. Involved in glucose uptake into skeletal muscles and muscle performance by activating PI3K and mTORC2-mediated AKT1 phosphorylation signaling pathways, possibly through the action of its downstream catalytic product all-trans-retinoic acid. The polypeptide is Dehydrogenase/reductase SDR family member 7C (Mus musculus (Mouse)).